A 175-amino-acid chain; its full sequence is General odorant-binding protein 84a (175 aa).

The N-terminal stretch at 1-24 (MYSALVRACAVIAFLILSPNCARA) is a signal peptide. 2 disulfides stabilise this stretch: cysteine 103–cysteine 151 and cysteine 140–cysteine 160.

As to expression, present only in a small number of hairs scattered over the surface of the funiculus.

The protein resides in the secreted. This is General odorant-binding protein 84a (Obp84a) from Drosophila melanogaster (Fruit fly).